The chain runs to 344 residues: tRNA N6-adenosine threonylcarbamoyltransferase (344 aa).

Fe cation is bound by residues His-112 and His-116. Substrate-binding positions include 134 to 138 (LASGG), Asp-167, Gly-180, and Asn-280. Asp-308 provides a ligand contact to Fe cation.

This sequence belongs to the KAE1 / TsaD family. Requires Fe(2+) as cofactor.

The protein localises to the cytoplasm. The enzyme catalyses L-threonylcarbamoyladenylate + adenosine(37) in tRNA = N(6)-L-threonylcarbamoyladenosine(37) in tRNA + AMP + H(+). Functionally, required for the formation of a threonylcarbamoyl group on adenosine at position 37 (t(6)A37) in tRNAs that read codons beginning with adenine. Is involved in the transfer of the threonylcarbamoyl moiety of threonylcarbamoyl-AMP (TC-AMP) to the N6 group of A37, together with TsaE and TsaB. TsaD likely plays a direct catalytic role in this reaction. The polypeptide is tRNA N6-adenosine threonylcarbamoyltransferase (Rickettsia peacockii (strain Rustic)).